Reading from the N-terminus, the 176-residue chain is Peptide deformylase (176 aa).

Residues cysteine 94 and histidine 136 each contribute to the Fe cation site. The active site involves glutamate 137. Histidine 140 is a Fe cation binding site.

It belongs to the polypeptide deformylase family. Fe(2+) serves as cofactor.

It catalyses the reaction N-terminal N-formyl-L-methionyl-[peptide] + H2O = N-terminal L-methionyl-[peptide] + formate. Its function is as follows. Removes the formyl group from the N-terminal Met of newly synthesized proteins. Requires at least a dipeptide for an efficient rate of reaction. N-terminal L-methionine is a prerequisite for activity but the enzyme has broad specificity at other positions. This is Peptide deformylase from Mesorhizobium japonicum (strain LMG 29417 / CECT 9101 / MAFF 303099) (Mesorhizobium loti (strain MAFF 303099)).